We begin with the raw amino-acid sequence, 739 residues long: Nucleoprotein (739 aa).

Residues Val334–Leu363 adopt a coiled-coil conformation. Disordered regions lie at residues Arg414–Asp475 and Phe498–Ser642. Over residues Thr570–Pro579 the composition is skewed to acidic residues. A compositionally biased stretch (basic and acidic residues) spans Ala614 to Ser624. Residues Asn625–Asn634 show a composition bias toward polar residues.

It belongs to the filoviruses nucleoprotein family. In terms of assembly, homooligomer. Homomultimerizes to form the nucleocapsid. Binds to viral genomic RNA. Interacts with VP35 and VP30 to form the nucleocapsid. Interacts with host PPP2R5C; this interaction leads to VP30 dephosphorylation and viral transcription. Interacts with VP24; this interaction facilitates nucleocapsid assembly and genome packaging. Interacts with matrix protein VP40; this interaction allows recruitment of the nucleocapsid into progeny virions. Interacts with host STAU1. Interacts with host NXF1 (via RNA-binding domain); this interaction recruits NXF1 to the inclusion bodies were viral replication takes place, probably to export viral mRNA-NXF1 complexes from these sites. Interacts with host CCDC92; this interaction sequesters NP in the host cytoplasm. Interacts with host TRIM14. Post-translationally, phosphorylated and O-glycosylated by host. Acetylated by host EP300 in vitro.

The protein resides in the virion. Its subcellular location is the host cytoplasm. In terms of biological role, oligomerizes into helical capsid to encapsidate the viral genome, protecting it from nucleases and the cellular innate immune response. VP35 binds to and stabilizes monomeric NP, keeping it soluble. Upon virus replication, NP is recruited to bind cooperatively viral genomic RNA and VP35 is released. The encapsidated genomic RNA is termed the nucleocapsid and serves as template for transcription and replication. The nucleocapsid is helical with a pitch of 10.81 NP per turn and a diameter of about 22nm. Each NP binds to six nucleotides of viral genomic RNA, three being exposed to the solvant and three hidden into the nucleocapsid. Also recruits host PPP2R5C phosphatase to dephosphorylate VP30 and thereby promote viral transcription. Upon virion assembly and budding, NP binds to VP24 and possibly host STAU1. The chain is Nucleoprotein (NP) from Homo sapiens (Human).